Here is a 944-residue protein sequence, read N- to C-terminus: UvrABC system protein A (944 aa).

The 242-residue stretch at 1–242 (MSKVDFLHIK…GKGIVKVENV (242 aa)) folds into the ABC transporter 1 domain. Residue 34 to 41 (GLSGSGKS) participates in ATP binding. The C4-type; degenerate zinc-finger motif lies at 256-283 (CPKGDFEMPKIETRLFSFNSPYGMCQNC). ABC transporter domains follow at residues 359 to 597 (EEID…KYLS) and 610 to 935 (SGSG…EKSY). An ATP-binding site is contributed by 643–650 (GVSGSGKS). A C4-type zinc finger spans residues 744–770 (CEKCSGDGSIKIEMFFLPNVYITCDHC).

It belongs to the ABC transporter superfamily. UvrA family. As to quaternary structure, forms a heterotetramer with UvrB during the search for lesions.

It localises to the cytoplasm. Functionally, the UvrABC repair system catalyzes the recognition and processing of DNA lesions. UvrA is an ATPase and a DNA-binding protein. A damage recognition complex composed of 2 UvrA and 2 UvrB subunits scans DNA for abnormalities. When the presence of a lesion has been verified by UvrB, the UvrA molecules dissociate. The chain is UvrABC system protein A from Mycoplasmopsis pulmonis (strain UAB CTIP) (Mycoplasma pulmonis).